Here is a 300-residue protein sequence, read N- to C-terminus: ATP synthase gamma chain (300 aa).

Belongs to the ATPase gamma chain family. In terms of assembly, F-type ATPases have 2 components, CF(1) - the catalytic core - and CF(0) - the membrane proton channel. CF(1) has five subunits: alpha(3), beta(3), gamma(1), delta(1), epsilon(1). CF(0) has three main subunits: a, b and c.

It is found in the cell membrane. Functionally, produces ATP from ADP in the presence of a proton gradient across the membrane. The gamma chain is believed to be important in regulating ATPase activity and the flow of protons through the CF(0) complex. This Enterococcus hirae (strain ATCC 9790 / DSM 20160 / JCM 8729 / LMG 6399 / NBRC 3181 / NCIMB 6459 / NCDO 1258 / NCTC 12367 / WDCM 00089 / R) protein is ATP synthase gamma chain.